The primary structure comprises 351 residues: Tropomodulin-2 (351 aa).

At Ser-25 the chain carries Phosphoserine.

This sequence belongs to the tropomodulin family. Binds to the N-terminus of tropomyosin and to actin. Binds to TMBr3 as well as to other low molecular mass tropomyosins (TM5a or TM5), but not to high molecular mass tropomyosins (TM2 or TMBr1). In terms of tissue distribution, neuronal-tissue specific.

Its subcellular location is the cytoplasm. The protein resides in the cytoskeleton. Functionally, blocks the elongation and depolymerization of the actin filaments at the pointed end. The Tmod/TM complex contributes to the formation of the short actin protofilament, which in turn defines the geometry of the membrane skeleton. This chain is Tropomodulin-2 (Tmod2), found in Rattus norvegicus (Rat).